Reading from the N-terminus, the 112-residue chain is Conotoxin vil14.5 (112 aa).

Residues 1-22 form the signal peptide; the sequence is MGFRVLVLVVMATTSALPFTFS. A propeptide spanning residues 23–85 is cleaved from the precursor; it reads EEPGRSPFRP…FAELSVGQRR (63 aa). Residues 53–74 form a disordered region; sequence RADGQPPDMRQPEMRRPEVRQP. Residues 62–74 show a composition bias toward basic and acidic residues; the sequence is RQPEMRRPEVRQP. 2 cysteine pairs are disulfide-bonded: Cys-91-Cys-111 and Cys-95-Cys-107.

It belongs to the conotoxin R superfamily. In terms of tissue distribution, expressed by the venom duct.

It is found in the secreted. The polypeptide is Conotoxin vil14.5 (Conus villepinii (Villepin's cone)).